We begin with the raw amino-acid sequence, 288 residues long: NAD(P)H-hydrate epimerase (288 aa).

Residues 1–47 constitute a mitochondrion transit peptide; sequence MSRLRALLGLGLLVAGSRVPRIKSQTIACRSGPTWWGPQRLNSGGRW. Phosphoserine is present on Ser49. Residues 65–275 form the YjeF N-terminal domain; the sequence is AQAVDQELFN…ALEKKYQLNL (211 aa). 119 to 123 serves as a coordination point for (6S)-NADPHX; sequence NNGGD. Asn120 contributes to the K(+) binding site. Residue Lys144 is modified to N6-succinyllysine. Asp185 contributes to the K(+) binding site. (6S)-NADPHX-binding positions include 189-195 and Asp218; that span reads GFSFKGD. Residue Ser221 participates in K(+) binding.

It belongs to the NnrE/AIBP family. Homodimer. Interacts with APOA1 and APOA2. The cofactor is K(+). Post-translationally, undergoes physiological phosphorylation during sperm capacitation, downstream to PKA activation. Ubiquitously expressed, with highest levels in kidney, heart and liver. Present in cerebrospinal fluid and urine but not in serum from healthy patients. Present in serum of sepsis patients (at protein level).

It localises to the mitochondrion. Its subcellular location is the secreted. It catalyses the reaction (6R)-NADHX = (6S)-NADHX. The enzyme catalyses (6R)-NADPHX = (6S)-NADPHX. Functionally, catalyzes the epimerization of the S- and R-forms of NAD(P)HX, a damaged form of NAD(P)H that is a result of enzymatic or heat-dependent hydration. This is a prerequisite for the S-specific NAD(P)H-hydrate dehydratase to allow the repair of both epimers of NAD(P)HX. Accelerates cholesterol efflux from endothelial cells to high-density lipoprotein (HDL) and thereby regulates angiogenesis. The protein is NAD(P)H-hydrate epimerase of Homo sapiens (Human).